A 201-amino-acid polypeptide reads, in one-letter code: MLVIGLTGGIASGKSTVARILERLGATIIDADLLAREAVLPGTPAHRAIVAAFGTEILLPDATIDRKALGRIVFANPDARRRLEAITHPAIARLSQARLAEARRSDAPAVFYVAPLLIEAGAADRVDDIWVVYADRETQLARLTERDGIGRGEAEQRLAAQMPMDEKASYGSAVIDNRGTSEETERQVVALWKERIEKNPR.

The DPCK domain maps to 3 to 201; it reads VIGLTGGIAS…WKERIEKNPR (199 aa). Position 11 to 16 (11 to 16) interacts with ATP; sequence ASGKST.

The protein belongs to the CoaE family.

The protein resides in the cytoplasm. The catalysed reaction is 3'-dephospho-CoA + ATP = ADP + CoA + H(+). The protein operates within cofactor biosynthesis; coenzyme A biosynthesis; CoA from (R)-pantothenate: step 5/5. Its function is as follows. Catalyzes the phosphorylation of the 3'-hydroxyl group of dephosphocoenzyme A to form coenzyme A. In Geobacter metallireducens (strain ATCC 53774 / DSM 7210 / GS-15), this protein is Dephospho-CoA kinase.